We begin with the raw amino-acid sequence, 457 residues long: ATP synthase subunit beta (457 aa).

147-154 (GGAGVGKT) serves as a coordination point for ATP.

This sequence belongs to the ATPase alpha/beta chains family. As to quaternary structure, F-type ATPases have 2 components, CF(1) - the catalytic core - and CF(0) - the membrane proton channel. CF(1) has five subunits: alpha(3), beta(3), gamma(1), delta(1), epsilon(1). CF(0) has three main subunits: a(1), b(2) and c(9-12). The alpha and beta chains form an alternating ring which encloses part of the gamma chain. CF(1) is attached to CF(0) by a central stalk formed by the gamma and epsilon chains, while a peripheral stalk is formed by the delta and b chains.

Its subcellular location is the cell inner membrane. The enzyme catalyses ATP + H2O + 4 H(+)(in) = ADP + phosphate + 5 H(+)(out). Its function is as follows. Produces ATP from ADP in the presence of a proton gradient across the membrane. The catalytic sites are hosted primarily by the beta subunits. The protein is ATP synthase subunit beta of Pasteurella multocida (strain Pm70).